A 156-amino-acid chain; its full sequence is WASQVSENRPVCKAIIQGKQFEGLVDTGADVSIIALNQWPKNWPKQKAVTGLVGIGTASEVYQSMEILHCLGPDNQESTVQPMITSIPLNLWGRDLLQQWGAEITMPAPLYSPTSQKIMTKMGYIPGKGLGKNEDGIKVPVEAKINQEREGIGYPF.

Positions 21–96 (FEGLVDTGAD…IPLNLWGRDL (76 aa)) constitute a Peptidase A2 domain. Residue D26 is part of the active site. A G-patch domain is found at 111–156 (YSPTSQKIMTKMGYIPGKGLGKNEDGIKVPVEAKINQEREGIGYPF).

It belongs to the peptidase A2 family. HERV class-II K(HML-2) subfamily. As to quaternary structure, active as a homodimer. Autoproteolytically processed at the N-terminus. Expected C-terminal autoprocessing not detected. The sequence shown is that of the processed Pro protein.

It carries out the reaction Processing at the authentic HIV-1 PR recognition site and release of the mature p17 matrix and the p24 capsid protein, as a result of the cleavage of the -SQNY-|-PIVQ- cleavage site.. Its activity is regulated as follows. Resistant to a number of clinically useful HIV-1 PR inhibitors. Inhibited by cyclic urea SD146. Its function is as follows. Retroviral proteases have roles in processing of the primary translation products and the maturation of the viral particle. Endogenous Pro proteins may have kept, lost or modified their original function during evolution. This endogenous protein has retained most of the characteristics of retroviral proteases. This chain is Endogenous retrovirus group K member 10 Pro protein (ERVK-10), found in Homo sapiens (Human).